We begin with the raw amino-acid sequence, 453 residues long: Phosphoglucosamine mutase (453 aa).

Serine 105 functions as the Phosphoserine intermediate in the catalytic mechanism. 4 residues coordinate Mg(2+): serine 105, aspartate 244, aspartate 246, and aspartate 248. Residue serine 105 is modified to Phosphoserine.

It belongs to the phosphohexose mutase family. It depends on Mg(2+) as a cofactor. Activated by phosphorylation.

The catalysed reaction is alpha-D-glucosamine 1-phosphate = D-glucosamine 6-phosphate. Its function is as follows. Catalyzes the conversion of glucosamine-6-phosphate to glucosamine-1-phosphate. The chain is Phosphoglucosamine mutase from Blochmanniella pennsylvanica (strain BPEN).